The chain runs to 469 residues: UDP-N-acetylmuramate--L-alanine ligase (469 aa).

Residue 113-119 (GAHGKTT) coordinates ATP.

Belongs to the MurCDEF family.

It is found in the cytoplasm. It carries out the reaction UDP-N-acetyl-alpha-D-muramate + L-alanine + ATP = UDP-N-acetyl-alpha-D-muramoyl-L-alanine + ADP + phosphate + H(+). It functions in the pathway cell wall biogenesis; peptidoglycan biosynthesis. Cell wall formation. The polypeptide is UDP-N-acetylmuramate--L-alanine ligase (Syntrophobacter fumaroxidans (strain DSM 10017 / MPOB)).